The sequence spans 327 residues: Microtubule-associated protein RP/EB family member 2 (327 aa).

The segment at 1 to 21 is disordered; the sequence is MPGPTQTLSPNGENNNDIIQD. The residue at position 9 (S9) is a Phosphoserine. Residues 57 to 159 form the Calponin-homology (CH) domain; that stretch reads TMSRHDIIAW…FIQWFKKFYD (103 aa). A Phosphotyrosine modification is found at Y167. 2 disordered regions span residues 171-240 and 299-327; these read EARQ…DKDL and ASEE…QEEY. Positions 187-327 are DCTN1-binding; sequence QIFNLPKKSH…EQQPPQQEEY (141 aa). Low complexity predominate over residues 200-234; the sequence is SPTAGAAKSSPAAKPGSTPSRPSSAKRASSSGSAS. S219 is subject to Phosphoserine. The EB1 C-terminal domain occupies 236–306; the sequence is SDKDLETQVI…LYASEEHEGH (71 aa). Positions 259–302 are APC-binding; that stretch reads EGVEKERDFYFGKLREIELLCQEHGQENDDLVQRLMDVLYASEE. Residues 300 to 317 show a composition bias toward basic and acidic residues; the sequence is SEEHEGHTEEPEAEEQAH. Positions 318-327 are enriched in low complexity; that stretch reads EQQPPQQEEY.

Belongs to the MAPRE family. In terms of assembly, interacts with DCTN1. Interacts with APC (via C-terminal). Interacts with monomeric and polymerized tubulin. Interacts with SLAIN1. Interacts (via the N-terminal region) with BAG1.

The protein localises to the cytoplasm. The protein resides in the cytoskeleton. May be involved in microtubule polymerization, and spindle function by stabilizing microtubules and anchoring them at centrosomes. May play a role in cell migration. This chain is Microtubule-associated protein RP/EB family member 2 (MAPRE2), found in Pongo abelii (Sumatran orangutan).